A 175-amino-acid polypeptide reads, in one-letter code: Adenine phosphoribosyltransferase (175 aa).

The protein belongs to the purine/pyrimidine phosphoribosyltransferase family. In terms of assembly, homodimer.

The protein localises to the cytoplasm. The catalysed reaction is AMP + diphosphate = 5-phospho-alpha-D-ribose 1-diphosphate + adenine. Its pathway is purine metabolism; AMP biosynthesis via salvage pathway; AMP from adenine: step 1/1. Its function is as follows. Catalyzes a salvage reaction resulting in the formation of AMP, that is energically less costly than de novo synthesis. This is Adenine phosphoribosyltransferase from Caldicellulosiruptor bescii (strain ATCC BAA-1888 / DSM 6725 / KCTC 15123 / Z-1320) (Anaerocellum thermophilum).